A 106-amino-acid polypeptide reads, in one-letter code: Pyruvate decarboxylase 2 (106 aa).

Mg(2+) is bound by residues Asn-10 and Gly-12.

Belongs to the TPP enzyme family. As to quaternary structure, homotetramer. It depends on a metal cation as a cofactor. Requires thiamine diphosphate as cofactor.

It carries out the reaction a 2-oxocarboxylate + H(+) = an aldehyde + CO2. This chain is Pyruvate decarboxylase 2 (PDC2), found in Zea mays (Maize).